A 345-amino-acid polypeptide reads, in one-letter code: KH domain-containing, RNA-binding, signal transduction-associated protein 2 (345 aa).

A KH domain is found at 65–131 (LIPVKQYPKF…AKHAHLSDEL (67 aa)). Disordered stretches follow at residues 178–224 (LNGS…TRGA) and 321–345 (SRST…YGRY). Positions 336–345 (GYREHPYGRY) are enriched in basic and acidic residues.

This sequence belongs to the KHDRBS family.

It is found in the nucleus. Functionally, RNA-binding protein that plays a role in the regulation of alternative splicing. The chain is KH domain-containing, RNA-binding, signal transduction-associated protein 2 (khdrbs2) from Xenopus tropicalis (Western clawed frog).